The sequence spans 186 residues: NADH dehydrogenase [ubiquinone] 1 beta subcomplex subunit 8, mitochondrial (186 aa).

The N-terminal 28 residues, 1-28 (MAVARTGVLGVQWLQRASWNMMPLGART), are a transit peptide targeting the mitochondrion. A helical transmembrane segment spans residues 133-153 (LFGFLAFMIFMCWVGEVYPVY).

It belongs to the complex I NDUFB8 subunit family. Complex I is composed of 45 different subunits.

It is found in the mitochondrion inner membrane. Accessory subunit of the mitochondrial membrane respiratory chain NADH dehydrogenase (Complex I), that is believed not to be involved in catalysis. Complex I functions in the transfer of electrons from NADH to the respiratory chain. The immediate electron acceptor for the enzyme is believed to be ubiquinone. The protein is NADH dehydrogenase [ubiquinone] 1 beta subcomplex subunit 8, mitochondrial (NDUFB8) of Pongo pygmaeus (Bornean orangutan).